Consider the following 882-residue polypeptide: Valine--tRNA ligase (882 aa).

The 'HIGH' region signature appears at 45–55 (PNVTGSLHIGH). Positions 525–529 (KFSKS) match the 'KMSKS' region motif. Residue K528 participates in ATP binding. Residues 812-881 (EGLIDVAKEK…VLKKGIQNLA (70 aa)) adopt a coiled-coil conformation.

It belongs to the class-I aminoacyl-tRNA synthetase family. ValS type 1 subfamily. In terms of assembly, monomer.

The protein localises to the cytoplasm. It carries out the reaction tRNA(Val) + L-valine + ATP = L-valyl-tRNA(Val) + AMP + diphosphate. Its function is as follows. Catalyzes the attachment of valine to tRNA(Val). As ValRS can inadvertently accommodate and process structurally similar amino acids such as threonine, to avoid such errors, it has a 'posttransfer' editing activity that hydrolyzes mischarged Thr-tRNA(Val) in a tRNA-dependent manner. The polypeptide is Valine--tRNA ligase (Leptospira interrogans serogroup Icterohaemorrhagiae serovar copenhageni (strain Fiocruz L1-130)).